The chain runs to 1369 residues: Rho guanine nucleotide exchange factor 10 (1369 aa).

A disordered region spans residues 1–106 (MRPPGFLSRA…ETTPVAEPTK (106 aa)). Residues 46–64 (NNEEEEGEQFDFDSGDEIP) are compositionally biased toward acidic residues. Over residues 83 to 100 (EAPAPTGGEDGAGAETTP) the composition is skewed to low complexity. Phosphoserine is present on Ser-180. Residues 184 to 254 (EAETPEVTED…ENSDSEPDEM (71 aa)) form a disordered region. A compositionally biased stretch (polar residues) spans 196 to 209 (PNSLSSEEPPTSED). The stretch at 304–355 (KKQLSHDLTRLKEHYEKKMRDLMASTVGVVEIQQLRQKHELKMQKLVKAAKD) forms a coiled coil. Ser-379 carries the post-translational modification Phosphoserine. The DH domain occupies 421–608 (VRRYILGSVV…ETLAEKLNER (188 aa)). 2 disordered regions span residues 1226-1260 (KDKS…LSQG) and 1277-1297 (QKSD…SSSL). Positions 1279-1296 (SDLSSSSGSLSLSHGSSS) are enriched in low complexity. Phosphoserine is present on Ser-1287. The residue at position 1338 (Gln-1338) is an N5-methylglutamine.

Post-translationally, methylated at Gln-1338 by N6AMT1.

Its function is as follows. May play a role in developmental myelination of peripheral nerves. This chain is Rho guanine nucleotide exchange factor 10 (ARHGEF10), found in Homo sapiens (Human).